The sequence spans 124 residues: Fluoride-specific ion channel FluC (124 aa).

Helical transmembrane passes span 4–24 (IVAI…LAGW), 32–52 (GFPY…GLIM), 67–87 (IGLT…SYET), and 96–116 (FITA…CTWL). 2 residues coordinate Na(+): glycine 75 and threonine 78.

It belongs to the fluoride channel Fluc/FEX (TC 1.A.43) family.

The protein resides in the cell inner membrane. The catalysed reaction is fluoride(in) = fluoride(out). Na(+) is not transported, but it plays an essential structural role and its presence is essential for fluoride channel function. Functionally, fluoride-specific ion channel. Important for reducing fluoride concentration in the cell, thus reducing its toxicity. The sequence is that of Fluoride-specific ion channel FluC from Geobacter metallireducens (strain ATCC 53774 / DSM 7210 / GS-15).